Consider the following 79-residue polypeptide: Small ribosomal subunit protein bS16c (79 aa).

The protein belongs to the bacterial ribosomal protein bS16 family.

Its subcellular location is the plastid. The protein resides in the chloroplast. The polypeptide is Small ribosomal subunit protein bS16c (Thalassiosira pseudonana (Marine diatom)).